A 396-amino-acid chain; its full sequence is Phosphoglycerate kinase (396 aa).

Residues 21 to 23 (DFN), R37, 60 to 63 (HLGR), R121, and R154 contribute to the substrate site. ATP contacts are provided by residues K205, G296, E327, and 353–356 (GGDS).

Belongs to the phosphoglycerate kinase family. Monomer.

The protein localises to the cytoplasm. It catalyses the reaction (2R)-3-phosphoglycerate + ATP = (2R)-3-phospho-glyceroyl phosphate + ADP. It functions in the pathway carbohydrate degradation; glycolysis; pyruvate from D-glyceraldehyde 3-phosphate: step 2/5. This is Phosphoglycerate kinase from Anaeromyxobacter dehalogenans (strain 2CP-1 / ATCC BAA-258).